Consider the following 412-residue polypeptide: MARFLLLLVAVAAAAAVLSLGDAAPSTAEVFWRAVLPESPLPDAFLRLLRPDTSFVVGKAEAAGGAARTGFPFDYTDYRGSDSPTTASGLDLAGDFGEPAPFGYDYSAQGEGGGGGAAAAAGEQVLAVDAGFNYDKYVGARKLRGGSSTAGGENDDEPFGYDYKAPSSGSGTAASTTARGVGTGATTTVFFHEEAVRVGERLPFYFPAATTSALGFLPRRVADSIPFTAAALPAVLALFGVAPDTAEAAGMRETLRTCEWPTLAGESKFCATSLEALVEGAMAALGTRDIAALASTLPRGGAPLQAYAVRAVLPVEGAGFVACHDQAYPYTVYRCHTTGPARAYMVEMEGDGGGDGGEAVTVATVCHTNTSRWNPEHVSFKLLGTKPGGSPVCHLMPYGHIVWAKNVKSSTA.

The first 23 residues, 1 to 23 (MARFLLLLVAVAAAAAVLSLGDA), serve as a signal peptide directing secretion. The BURP domain maps to 190–406 (FFHEEAVRVG…PYGHIVWAKN (217 aa)). N369 carries an N-linked (GlcNAc...) asparagine glycan.

In terms of tissue distribution, specifically expressed in anthers, in the tapetum and microspores (at protein level).

In terms of biological role, required for pollen development. Probably synthesized in the tapetum, packaged in Ubisch bodies and transported at appropriate stages to the micropsores. The sequence is that of BURP domain-containing protein 13 (BURP13) from Oryza sativa subsp. japonica (Rice).